The sequence spans 87 residues: UPF0335 protein RHECIAT_CH0003797 (87 aa).

The protein belongs to the UPF0335 family.

This is UPF0335 protein RHECIAT_CH0003797 from Rhizobium etli (strain CIAT 652).